The following is a 203-amino-acid chain: uncharacterized protein (203 aa).

Residues 9–29 traverse the membrane as a helical segment; sequence LVVLFTIVTFGLVSPPAALMA.

The protein localises to the membrane. This is an uncharacterized protein from Bacillus subtilis (strain 168).